A 287-amino-acid chain; its full sequence is tRNA pseudouridine synthase B (287 aa).

Asp-38 (nucleophile) is an active-site residue.

The protein belongs to the pseudouridine synthase TruB family. Type 1 subfamily.

The catalysed reaction is uridine(55) in tRNA = pseudouridine(55) in tRNA. Functionally, responsible for synthesis of pseudouridine from uracil-55 in the psi GC loop of transfer RNAs. The polypeptide is tRNA pseudouridine synthase B (Aquifex aeolicus (strain VF5)).